A 497-amino-acid polypeptide reads, in one-letter code: Guanosine-5'-triphosphate,3'-diphosphate pyrophosphatase (497 aa).

The protein belongs to the GppA/Ppx family. GppA subfamily.

It carries out the reaction guanosine 3'-diphosphate 5'-triphosphate + H2O = guanosine 3',5'-bis(diphosphate) + phosphate + H(+). It functions in the pathway purine metabolism; ppGpp biosynthesis; ppGpp from GTP: step 2/2. Functionally, catalyzes the conversion of pppGpp to ppGpp. Guanosine pentaphosphate (pppGpp) is a cytoplasmic signaling molecule which together with ppGpp controls the 'stringent response', an adaptive process that allows bacteria to respond to amino acid starvation, resulting in the coordinated regulation of numerous cellular activities. The polypeptide is Guanosine-5'-triphosphate,3'-diphosphate pyrophosphatase (Vibrio campbellii (strain ATCC BAA-1116)).